Reading from the N-terminus, the 221-residue chain is ATP-dependent dethiobiotin synthetase BioD (221 aa).

13 to 18 contacts ATP; the sequence is DIGKTY. Thr-17 lines the Mg(2+) pocket. Lys-38 is an active-site residue. Ser-42 is a substrate binding site. ATP-binding positions include Asp-51, 112 to 115, and 176 to 177; these read EGSG and NR. Mg(2+) is bound by residues Asp-51 and Glu-112.

It belongs to the dethiobiotin synthetase family. As to quaternary structure, homodimer. Mg(2+) is required as a cofactor.

It is found in the cytoplasm. It catalyses the reaction (7R,8S)-7,8-diammoniononanoate + CO2 + ATP = (4R,5S)-dethiobiotin + ADP + phosphate + 3 H(+). It functions in the pathway cofactor biosynthesis; biotin biosynthesis; biotin from 7,8-diaminononanoate: step 1/2. Functionally, catalyzes a mechanistically unusual reaction, the ATP-dependent insertion of CO2 between the N7 and N8 nitrogen atoms of 7,8-diaminopelargonic acid (DAPA, also called 7,8-diammoniononanoate) to form a ureido ring. This is ATP-dependent dethiobiotin synthetase BioD from Brachyspira hyodysenteriae (strain ATCC 49526 / WA1).